We begin with the raw amino-acid sequence, 307 residues long: Protoheme IX farnesyltransferase (307 aa).

9 helical membrane passes run 31-51, 52-72, 102-119, 123-145, 151-171, 179-199, 225-245, 247-267, and 281-301; these read VMSLVIFTCFVGMLLAPYSVH, PFIASIAVVCIAFGAGSAGAI, ALSFGLITGFFAVFFMAL, LLASFLLLFTIFYYICIYTIWLK, NIVIGGVSGALPPVIGYAAVS, VILFLIILIWTPPHSWALALF, ILIYSFLLFIVSLMPFFIGMS, FIYLIISGILGLVFLYYAGSL, and FVYSIFYLFFIFLLLYLTNTI.

The protein belongs to the UbiA prenyltransferase family. Protoheme IX farnesyltransferase subfamily.

Its subcellular location is the cell inner membrane. It catalyses the reaction heme b + (2E,6E)-farnesyl diphosphate + H2O = Fe(II)-heme o + diphosphate. It participates in porphyrin-containing compound metabolism; heme O biosynthesis; heme O from protoheme: step 1/1. In terms of biological role, converts heme B (protoheme IX) to heme O by substitution of the vinyl group on carbon 2 of heme B porphyrin ring with a hydroxyethyl farnesyl side group. The polypeptide is Protoheme IX farnesyltransferase (Rickettsia canadensis (strain McKiel)).